The chain runs to 346 residues: S-adenosylmethionine:tRNA ribosyltransferase-isomerase (346 aa).

Belongs to the QueA family. In terms of assembly, monomer.

Its subcellular location is the cytoplasm. It carries out the reaction 7-aminomethyl-7-carbaguanosine(34) in tRNA + S-adenosyl-L-methionine = epoxyqueuosine(34) in tRNA + adenine + L-methionine + 2 H(+). The protein operates within tRNA modification; tRNA-queuosine biosynthesis. Functionally, transfers and isomerizes the ribose moiety from AdoMet to the 7-aminomethyl group of 7-deazaguanine (preQ1-tRNA) to give epoxyqueuosine (oQ-tRNA). In Shewanella frigidimarina (strain NCIMB 400), this protein is S-adenosylmethionine:tRNA ribosyltransferase-isomerase.